A 303-amino-acid polypeptide reads, in one-letter code: MRLRHVVSSLDLTRDDYFRIFELVDKFSNVKKLNYLSGKVVSLAFFEPSTRTAQSFHTAAIKLGADVIGFASEESTSIAKGENLADTIRMLNNYSNCIVMRHKFDGAALFASEISDIPIINAGDGKHEHPTQALIDLYTIYKVFGEIDGRTFGLLGDLKYARTVNSLLRALTRFKPKKVFLISPSQLKVRREILDGLNYPVIETENPYDVIQDIDVLYVTRIQKERFVDEVEYEKVKESYVVDLKLVNMMKKDGIILHPLPRVTEIDRKVDKTTNAKYFYQASLAVPVRMALFYEVLGERKDD.

Residues R51 and T52 each contribute to the carbamoyl phosphate site. Residue K80 participates in L-aspartate binding. 3 residues coordinate carbamoyl phosphate: R101, H129, and Q132. R162 and R221 together coordinate L-aspartate. Residues L260 and P261 each contribute to the carbamoyl phosphate site.

The protein belongs to the aspartate/ornithine carbamoyltransferase superfamily. ATCase family. In terms of assembly, heterooligomer of catalytic and regulatory chains.

The catalysed reaction is carbamoyl phosphate + L-aspartate = N-carbamoyl-L-aspartate + phosphate + H(+). Its pathway is pyrimidine metabolism; UMP biosynthesis via de novo pathway; (S)-dihydroorotate from bicarbonate: step 2/3. Functionally, catalyzes the condensation of carbamoyl phosphate and aspartate to form carbamoyl aspartate and inorganic phosphate, the committed step in the de novo pyrimidine nucleotide biosynthesis pathway. The sequence is that of Aspartate carbamoyltransferase catalytic subunit from Saccharolobus islandicus (strain M.16.27) (Sulfolobus islandicus).